The following is a 398-amino-acid chain: Minor cardiolipin synthase ClsB (398 aa).

The helical transmembrane segment at 3-23 (VFIVIMIIVVIFFALILLDIF) threads the bilayer. PLD phosphodiesterase domains are found at residues 141-168 (MQKR…AEEY) and 311-338 (YQGF…DKRS).

Belongs to the phospholipase D family. Cardiolipin synthase subfamily.

Its subcellular location is the cell membrane. Functionally, involved in the biosynthesis of cardiolipin. The chain is Minor cardiolipin synthase ClsB (clsB) from Bacillus subtilis (strain 168).